The sequence spans 283 residues: Cilia- and flagella-associated protein 77 (283 aa).

A disordered region spans residues 151–170; it reads DQEDRRQKEPPPIPPNMTFG.

The protein belongs to the CFAP77 family. In terms of assembly, microtubule inner protein component of sperm flagellar doublet microtubules.

Its subcellular location is the cytoplasm. It is found in the cytoskeleton. The protein localises to the cilium axoneme. The protein resides in the flagellum axoneme. Its function is as follows. Microtubule inner protein (MIP) part of the dynein-decorated doublet microtubules (DMTs) in cilia axoneme, which is required for motile cilia beating. This is Cilia- and flagella-associated protein 77 from Mus musculus (Mouse).